The primary structure comprises 334 residues: D-fructose 1,6-bisphosphatase class 2/sedoheptulose 1,7-bisphosphatase (334 aa).

Asp-33, Glu-57, Asp-85, and Glu-88 together coordinate Mn(2+). Residues 88-90 (EGT), Tyr-119, 164-166 (RAR), and 186-188 (DGD) each bind substrate. Glu-213 contacts Mn(2+).

The protein belongs to the FBPase class 2 family. As to quaternary structure, homotetramer. Requires Mn(2+) as cofactor.

It catalyses the reaction beta-D-fructose 1,6-bisphosphate + H2O = beta-D-fructose 6-phosphate + phosphate. It carries out the reaction D-sedoheptulose 1,7-bisphosphate + H2O = D-sedoheptulose 7-phosphate + phosphate. The protein operates within carbohydrate biosynthesis; Calvin cycle. Functionally, catalyzes the hydrolysis of fructose 1,6-bisphosphate (Fru 1,6-P2) and sedoheptulose 1,7-bisphosphate (Sed 1,7-P2) to fructose 6-phosphate and sedoheptulose 7-phosphate, respectively. The chain is D-fructose 1,6-bisphosphatase class 2/sedoheptulose 1,7-bisphosphatase from Parasynechococcus marenigrum (strain WH8102).